The sequence spans 220 residues: MGQKVHPIGFRLGVIKTWDSKWFEHKNYAQWLHEDIRIREFVKKSLNHAGVSKVEIERAANKVKVNVHTARPGIVIGKRGAGIETVKKDLQQFTKNEVFLNIVEVRKAETDAQLVAENIATQLERRIAFRRAMKKALQTAMKFGAKGIRVACSGRLGGAEMARYEWYREGRVPLHTLRADIDYGFAEAKTTYGKIGCKVWVCKGEVLPGKGGQAPMPSNR.

The region spanning 38–106 (IREFVKKSLN…EVFLNIVEVR (69 aa)) is the KH type-2 domain.

The protein belongs to the universal ribosomal protein uS3 family. Part of the 30S ribosomal subunit. Forms a tight complex with proteins S10 and S14.

In terms of biological role, binds the lower part of the 30S subunit head. Binds mRNA in the 70S ribosome, positioning it for translation. In Myxococcus xanthus (strain DK1622), this protein is Small ribosomal subunit protein uS3.